The following is a 554-amino-acid chain: (Z)-gamma-bisabolene synthase 1 (554 aa).

Residues Asp-306, Asp-310, Asp-450, and Asp-458 each contribute to the Mg(2+) site. Residues Asp-306 to Asp-310 carry the DDXXD motif motif.

Belongs to the terpene synthase family. Tpsa subfamily. It depends on Mg(2+) as a cofactor. Mn(2+) is required as a cofactor. Predominantly expressed in roots. Expressed in the cortex and the sub-epidermal layers of roots. Also detected in leaf hydathodes and flower stigmata.

The protein localises to the cytoplasm. It carries out the reaction (2E,6E)-farnesyl diphosphate = (Z)-gamma-bisabolene + diphosphate. It participates in secondary metabolite biosynthesis; terpenoid biosynthesis. Functionally, involved in sesquiterpene (C15) biosynthesis. The major product is (Z)-gamma-bisabolene with minor amounts of (E)-nerolidol and alpha-bisabolol. This Arabidopsis thaliana (Mouse-ear cress) protein is (Z)-gamma-bisabolene synthase 1 (TPS12).